The sequence spans 587 residues: Heavy metal-associated isoprenylated plant protein 33 (587 aa).

Residues 9-72 enclose the HMA domain; the sequence is IQTCVLKVNI…KLLKSGKHAE (64 aa). A metal cation is bound by residues cysteine 20 and cysteine 23. Disordered regions lie at residues 98–146, 176–261, 287–449, 462–504, and 532–587; these read QIDH…MVIP, LKLP…KPMM, AHKN…PMSN, PGGG…QQQQ, and YARP…CNIM. Gly residues-rich tracts occupy residues 104–113 and 121–140; these read KGGGGGGGGP and KIGG…GGGP. The segment covering 194 to 208 has biased composition (low complexity); that stretch reads PMNKNPQMPNNPNQK. Acidic residues predominate over residues 215–248; it reads PDDDDEEDFSDEFDDEFDEDDDEFDDDLEDDEFD. Gly residues-rich tracts occupy residues 290-300, 312-419, and 428-445; these read NGGGPGPAGGK, MGGG…GGGP, and GAMG…GGPG. The segment covering 471–483 has biased composition (low complexity); it reads SAEAPPGYFQGQV. Pro residues-rich tracts occupy residues 534 to 547 and 554 to 565; these read RPPP…PQPQ and YPYPYPYPPQYP. Residues 578 to 587 are compositionally biased toward polar residues; sequence DENTSSCNIM. The residue at position 584 (cysteine 584) is a Cysteine methyl ester. Cysteine 584 carries the S-farnesyl cysteine lipid modification. A propeptide spans 585-587 (removed in mature form); it reads NIM.

It belongs to the HIPP family.

Heavy-metal-binding protein. This is Heavy metal-associated isoprenylated plant protein 33 from Arabidopsis thaliana (Mouse-ear cress).